The following is an 844-amino-acid chain: Putative ubiquitin thioesterase 232R (844 aa).

4 disordered regions span residues Asn-136–Glu-223, Ser-261–Glu-287, Leu-326–Thr-377, and Gln-422–Val-541. The span at Ser-137 to Ser-216 shows a compositional bias: low complexity. Low complexity-rich tracts occupy residues Arg-332–Arg-341 and Arg-354–Arg-364. A compositionally biased stretch (pro residues) spans Ser-429–Val-438. Over residues Val-472–Lys-485 the composition is skewed to basic and acidic residues. A compositionally biased stretch (low complexity) spans Ser-504 to Ser-518. A compositionally biased stretch (basic and acidic residues) spans Glu-526–Arg-535. The region spanning Tyr-590–Ile-725 is the OTU domain. Residue Asp-598 is part of the active site. Cys-601 functions as the Nucleophile in the catalytic mechanism. The active site involves His-718.

The catalysed reaction is Thiol-dependent hydrolysis of ester, thioester, amide, peptide and isopeptide bonds formed by the C-terminal Gly of ubiquitin (a 76-residue protein attached to proteins as an intracellular targeting signal).. Hydrolase that can remove conjugated ubiquitin from proteins and may therefore play an important regulatory role at the level of protein turnover by preventing degradation. The protein is Putative ubiquitin thioesterase 232R of Aedes vexans (Inland floodwater mosquito).